Here is a 65-residue protein sequence, read N- to C-terminus: Antimicrobial peptide 1 (65 aa).

Residues 1–27 (MAKVSSAYLKFALVMILLLSVISAVMS) form the signal peptide. Disulfide bonds link cysteine 30–cysteine 47, cysteine 37–cysteine 51, and cysteine 46–cysteine 62.

This sequence belongs to the AMP family. In terms of tissue distribution, seed specific.

Its subcellular location is the secreted. Possesses antifungal activity. The protein is Antimicrobial peptide 1 of Phytolacca americana (American pokeweed).